A 983-amino-acid chain; its full sequence is Inner tegument protein (983 aa).

Residues 474–983 (LNVNTHFAVQ…TSVSLPPASP (510 aa)) are interaction with large tegument protein. Residues 902–932 (PWESAPQPPRLRMTPDTDHEESTAGATSVPE) form a disordered region. Over residues 914–923 (MTPDTDHEES) the composition is skewed to basic and acidic residues.

The protein belongs to the herpesviridae inner tegument protein family. Interacts (via C-terminus) with the large tegument protein/LTP (via N-terminus).

It is found in the virion tegument. Its subcellular location is the host cytoplasm. The protein localises to the host nucleus. It localises to the host Golgi apparatus. The protein resides in the host trans-Golgi network. Functionally, plays an essential role in cytoplasmic secondary envelopment during viral egress. Interacts with the capsid via the large tegument protein/LTP and participates in its transport to the host trans-Golgi network (TGN) where secondary envelopment occurs. Modulates tegumentation and capsid accumulation at the viral assembly complex. The chain is Inner tegument protein (UL47) from Homo sapiens (Human).